A 452-amino-acid polypeptide reads, in one-letter code: Neuromedin-K receptor (452 aa).

Topologically, residues 1-71 are extracellular; it reads MASVPTGENW…TNQFVQPSWR (71 aa). Residues Asn-9, Asn-23, Asn-40, and Asn-60 are each glycosylated (N-linked (GlcNAc...) asparagine). A helical transmembrane segment spans residues 72–94; that stretch reads IALWSLAYGLVVAVAVFGNLIVI. Residues 95–104 are Cytoplasmic-facing; it reads WIILAHKRMR. The chain crosses the membrane as a helical span at residues 105–126; it reads TVTNYFLVNLAFSDASVAAFNT. Residues 127–146 are Extracellular-facing; that stretch reads LVNFIYGVHSEWYFGANYCR. Cys-145 and Cys-220 form a disulfide bridge. A helical membrane pass occupies residues 147 to 168; that stretch reads FQNFFPITAVFASIYSMTAIAV. Residues 169-188 lie on the Cytoplasmic side of the membrane; sequence DRYMAIIDPLKPRLSATATK. Residues 189–209 form a helical membrane-spanning segment; that stretch reads IVIGSIWILAFLLAFPQCLYS. The Extracellular segment spans residues 210-232; that stretch reads KIKVMPGRTLCYVQWPEGPKQHF. A helical transmembrane segment spans residues 233-257; the sequence is TYHIIVIILVYCFPLLIMGVTYTIV. The Cytoplasmic portion of the chain corresponds to 258–286; the sequence is GITLWGGEIPGDTCDKYHEQLKAKRKVVK. The chain crosses the membrane as a helical span at residues 287–308; it reads MMIIVVVTFAICWLPYHVYFIL. At 309–321 the chain is on the extracellular side; it reads TAIYQQLNRWKYI. Residues 322–346 traverse the membrane as a helical segment; the sequence is QQVYLASFWLAMSSTMYNPIIYCCL. Residues 347–452 are Cytoplasmic-facing; that stretch reads NKRFRAGFKR…SPYTSVDEYS (106 aa). A lipid anchor (S-palmitoyl cysteine) is attached at Cys-361. The tract at residues 401 to 452 is disordered; that stretch reads DPSEGDPAKSSRKKRAVPRDPSANGCSHREFKSASTTSSFISSPYTSVDEYS. The span at 433-452 shows a compositional bias: low complexity; the sequence is SASTTSSFISSPYTSVDEYS.

It belongs to the G-protein coupled receptor 1 family. Post-translationally, the anchoring of this receptor to the plasma membrane is probably mediated by the palmitoylation of a cysteine residue.

Its subcellular location is the cell membrane. In terms of biological role, this is a receptor for the tachykinin neuropeptide neuromedin-K (neurokinin B). It is associated with G proteins that activate a phosphatidylinositol-calcium second messenger system. The sequence is that of Neuromedin-K receptor (Tacr3) from Mus musculus (Mouse).